A 292-amino-acid chain; its full sequence is Tetratricopeptide repeat protein 1 (292 aa).

2 stretches are compositionally biased toward basic and acidic residues: residues 1–12 (MEEKSEDCKVPE) and 47–64 (KAAE…ECFH). The tract at residues 1-125 (MEEKSEDCKV…SAKLKEEGNE (125 aa)) is disordered. The span at 88-98 (SSSELDEEYLI) shows a compositional bias: acidic residues. S90 carries the post-translational modification Phosphoserine. A compositionally biased stretch (basic and acidic residues) spans 99-125 (ELEKNMPEEEKQKRREESAKLKEEGNE). TPR repeat units follow at residues 116–149 (SAKL…CPAC), 155–188 (SVLF…NPTY), and 189–222 (IRAI…DPSV).

In terms of assembly, interacts with the GAP domain of NF1. Interacts (via TPR repeats) with HSP90AA1 and HSPA8.

The sequence is that of Tetratricopeptide repeat protein 1 (Ttc1) from Mus musculus (Mouse).